A 169-amino-acid polypeptide reads, in one-letter code: uncharacterized protein (169 aa).

4 N-linked (GlcNAc...) asparagine; by host glycosylation sites follow: Asn13, Asn29, Asn39, and Asn48. A Cell attachment site motif is present at residues Arg109–Asp111. An N-linked (GlcNAc...) asparagine; by host glycan is attached at Asn135. Residues Ile145 to Ile165 traverse the membrane as a helical segment.

The protein resides in the membrane. This is an uncharacterized protein from Acanthamoeba polyphaga (Amoeba).